The primary structure comprises 479 residues: Deoxyribodipyrimidine photo-lyase (479 aa).

The Photolyase/cryptochrome alpha/beta domain maps to 6-132 (APVIVWFRKD…TVRSFSGQLL (127 aa)). Y226 provides a ligand contact to FAD. R230 lines the DNA pocket. Residues 238-242 (TSLLS) and 277-284 (EIVWREFC) each bind FAD. 2 interaction with DNA regions span residues 277–284 (EIVWREFC) and 343–344 (NR). 374–376 (DAD) serves as a coordination point for FAD. Residue Q406 coordinates DNA.

Belongs to the DNA photolyase class-3 family. It depends on FAD as a cofactor. (6R)-5,10-methylene-5,6,7,8-tetrahydrofolate is required as a cofactor.

It carries out the reaction cyclobutadipyrimidine (in DNA) = 2 pyrimidine residues (in DNA).. Photolyase involved in the repair of UV radiation-induced DNA damage. By using blue-light energy, catalyzes the photoreactivation of cyclobutane pyrimidine dimers (CPDs), which are formed between adjacent bases on the same DNA strand upon exposure to ultraviolet radiation. Can repair CPD lesions in ssDNA as well as in dsDNA. This chain is Deoxyribodipyrimidine photo-lyase, found in Agrobacterium fabrum (strain C58 / ATCC 33970) (Agrobacterium tumefaciens (strain C58)).